The following is a 251-amino-acid chain: V-set and transmembrane domain-containing protein 2B (251 aa).

The signal sequence occupies residues 1–25; it reads MEKQGLFSALCYLMLNTPLLFSVNA. An Ig-like V-type domain is found at 26 to 142; the sequence is TFTEVPKDVT…DETQEHKAQA (117 aa). The Extracellular portion of the chain corresponds to 26–226; the sequence is TFTEVPKDVT…RQQHGSGTGP (201 aa). A disulfide bridge connects residues C46 and C125. The segment at 157 to 213 is disordered; that stretch reads AAEAVSHIQSSGPRRNNPSSRATPEPGNKRAVPPAENLAPSLSTAASSSASPAPGKA. Low complexity-rich tracts occupy residues 166 to 177 and 195 to 213; these read SSGPRRNNPSSR and APSL…PGKA. The helical transmembrane segment at 227–247 threads the bilayer; that stretch reads IFANDPALYMFLLIFHQLVYL. Over 248–251 the chain is Cytoplasmic; that stretch reads LLNH.

It is found in the membrane. The chain is V-set and transmembrane domain-containing protein 2B (vstm2b) from Xenopus tropicalis (Western clawed frog).